We begin with the raw amino-acid sequence, 494 residues long: Histidine--tRNA ligase (494 aa).

The protein belongs to the class-II aminoacyl-tRNA synthetase family. In terms of assembly, homodimer.

The protein resides in the cytoplasm. It catalyses the reaction tRNA(His) + L-histidine + ATP = L-histidyl-tRNA(His) + AMP + diphosphate + H(+). The polypeptide is Histidine--tRNA ligase (Cereibacter sphaeroides (strain ATCC 17023 / DSM 158 / JCM 6121 / CCUG 31486 / LMG 2827 / NBRC 12203 / NCIMB 8253 / ATH 2.4.1.) (Rhodobacter sphaeroides)).